A 108-amino-acid chain; its full sequence is Ig kappa chain V-V region NQ5-89.4 (108 aa).

A framework-1 region spans residues 1-23; that stretch reads DIQMTQTTSSLSASLGHRVTITC. Residues Cys-23 and Cys-88 are joined by a disulfide bond. The tract at residues 24–34 is complementarity-determining-1; that stretch reads SASQDISNYLN. Residues 35–49 form a framework-2 region; sequence WYQQKPDGTVKLLIY. Residues 50-56 are complementarity-determining-2; the sequence is YTSRLHS. Residues 57-88 are framework-3; the sequence is GVPSRFSGSGSATDYSLTITNLQQEDXATYXC. Residues 89–97 form a complementarity-determining-3 region; the sequence is QQGNTLPYT. Residues 98-107 form a framework-4 region; sequence FGGGTKLXIK.

Functionally, anti-2-phenyl oxazolone (PHOX) Antibody. The polypeptide is Ig kappa chain V-V region NQ5-89.4 (Mus musculus (Mouse)).